Consider the following 531-residue polypeptide: Chaperonin GroEL, chloroplastic (531 aa).

Residues 30–33 (TLGP), 87–91 (DGTTT), Gly-415, 481–483 (NAA), and Asp-497 each bind ATP.

This sequence belongs to the chaperonin (HSP60) family. As to quaternary structure, forms a cylinder of 14 subunits composed of two heptameric rings stacked back-to-back. Interacts with the co-chaperonin GroES.

It is found in the plastid. Its subcellular location is the chloroplast. It catalyses the reaction ATP + H2O + a folded polypeptide = ADP + phosphate + an unfolded polypeptide.. Together with its co-chaperonin GroES, plays an essential role in assisting protein folding. The GroEL-GroES system forms a nano-cage that allows encapsulation of the non-native substrate proteins and provides a physical environment optimized to promote and accelerate protein folding. The polypeptide is Chaperonin GroEL, chloroplastic (Emiliania huxleyi (Coccolithophore)).